A 491-amino-acid chain; its full sequence is 3-octaprenyl-4-hydroxybenzoate carboxy-lyase (491 aa).

A Mn(2+)-binding site is contributed by Asn-172. Residues 175–177 (IYR), 189–191 (RWL), and 194–195 (RG) contribute to the prenylated FMN site. Position 238 (Glu-238) interacts with Mn(2+). The active-site Proton donor is Asp-287.

This sequence belongs to the UbiD family. Homohexamer. Requires prenylated FMN as cofactor. Mn(2+) is required as a cofactor.

The protein localises to the cell membrane. The enzyme catalyses a 4-hydroxy-3-(all-trans-polyprenyl)benzoate + H(+) = a 2-(all-trans-polyprenyl)phenol + CO2. It participates in cofactor biosynthesis; ubiquinone biosynthesis. Its function is as follows. Catalyzes the decarboxylation of 3-octaprenyl-4-hydroxy benzoate to 2-octaprenylphenol, an intermediate step in ubiquinone biosynthesis. In Histophilus somni (strain 129Pt) (Haemophilus somnus), this protein is 3-octaprenyl-4-hydroxybenzoate carboxy-lyase.